A 508-amino-acid chain; its full sequence is Steroid 17-alpha-hydroxylase/17,20 lyase (508 aa).

Cys442 is a heme binding site.

The protein belongs to the cytochrome P450 family. Requires heme as cofactor.

It localises to the endoplasmic reticulum membrane. Its subcellular location is the microsome membrane. The catalysed reaction is a C21-steroid + reduced [NADPH--hemoprotein reductase] + O2 = a 17alpha-hydroxy-C21-steroid + oxidized [NADPH--hemoprotein reductase] + H2O + H(+). The enzyme catalyses progesterone + reduced [NADPH--hemoprotein reductase] + O2 = 17alpha-hydroxyprogesterone + oxidized [NADPH--hemoprotein reductase] + H2O + H(+). It catalyses the reaction pregnenolone + reduced [NADPH--hemoprotein reductase] + O2 = 17alpha-hydroxypregnenolone + oxidized [NADPH--hemoprotein reductase] + H2O + H(+). It carries out the reaction 17alpha-hydroxyprogesterone + reduced [NADPH--hemoprotein reductase] + O2 = androst-4-ene-3,17-dione + acetate + oxidized [NADPH--hemoprotein reductase] + H2O + 2 H(+). The catalysed reaction is 17alpha-hydroxyprogesterone + reduced [NADPH--hemoprotein reductase] + O2 = 16alpha,17alpha-dihydroxyprogesterone + oxidized [NADPH--hemoprotein reductase] + H2O + H(+). The enzyme catalyses 16alpha,17alpha-dihydroxyprogesterone + reduced [NADPH--hemoprotein reductase] + O2 = 6beta,16alpha,17alpha-trihydroxyprogesterone + oxidized [NADPH--hemoprotein reductase] + H2O + H(+). It catalyses the reaction 17alpha-hydroxypregnenolone + reduced [NADPH--hemoprotein reductase] + O2 = 3beta-hydroxyandrost-5-en-17-one + acetate + oxidized [NADPH--hemoprotein reductase] + H2O + 2 H(+). It carries out the reaction 16alpha,17alpha-dihydroxypregnenolone + reduced [NADPH--hemoprotein reductase] + O2 = 3beta,16alpha-dihydroxy-androst-5-en-17-one + acetate + oxidized [NADPH--hemoprotein reductase] + H2O + 2 H(+). The catalysed reaction is 3beta-hydroxyandrost-5-en-17-one + reduced [NADPH--hemoprotein reductase] + O2 = 3beta,16alpha-dihydroxy-androst-5-en-17-one + oxidized [NADPH--hemoprotein reductase] + H2O + H(+). The enzyme catalyses androst-4-ene-3,17-dione + reduced [NADPH--hemoprotein reductase] + O2 = 16alpha-hydroxyandrost-4-ene-3,17-dione + oxidized [NADPH--hemoprotein reductase] + H2O + H(+). Its pathway is steroid hormone biosynthesis. It functions in the pathway steroid biosynthesis; glucocorticoid biosynthesis. With respect to regulation, regulated predominantly by intracellular cAMP levels. The 17,20-lyase activity is stimulated by cytochrome b5, which acts as an allosteric effector increasing the Vmax of the lyase activity. In terms of biological role, a cytochrome P450 monooxygenase involved in corticoid and androgen biosynthesis. Catalyzes 17-alpha hydroxylation of C21 steroids, which is common for both pathways. A second oxidative step, required only for androgen synthesis, involves an acyl-carbon cleavage. The 17-alpha hydroxy intermediates, as part of adrenal glucocorticoids biosynthesis pathway, are precursors of cortisol. Hydroxylates steroid hormones, pregnenolone and progesterone to form 17-alpha hydroxy metabolites, followed by the cleavage of the C17-C20 bond to form C19 steroids, dehydroepiandrosterone (DHEA) and androstenedione. Has 16-alpha hydroxylase activity. Catalyzes 16-alpha hydroxylation of 17-alpha hydroxy pregnenolone, followed by the cleavage of the C17-C20 bond to form 16-alpha-hydroxy DHEA. Also 16-alpha hydroxylates androgens, relevant for estriol synthesis. Mechanistically, uses molecular oxygen inserting one oxygen atom into a substrate, and reducing the second into a water molecule, with two electrons provided by NADPH via cytochrome P450 reductase (CPR; NADPH-ferrihemoprotein reductase). The polypeptide is Steroid 17-alpha-hydroxylase/17,20 lyase (CYP17A1) (Cavia porcellus (Guinea pig)).